Consider the following 250-residue polypeptide: Heme oxygenase 2 (250 aa).

His-16 lines the heme b pocket. Residues 228-250 (QDRPGSTEARSTAGHPITLMVGE) form a disordered region.

Belongs to the heme oxygenase family. As to quaternary structure, homodimer.

The enzyme catalyses heme b + 3 reduced [NADPH--hemoprotein reductase] + 3 O2 = biliverdin IXalpha + CO + Fe(2+) + 3 oxidized [NADPH--hemoprotein reductase] + 3 H2O + H(+). Its function is as follows. Catalyzes the opening of the heme ring with the release of iron. Key enzyme in the synthesis of the chromophoric part of the photosynthetic antennae. In Synechocystis sp. (strain ATCC 27184 / PCC 6803 / Kazusa), this protein is Heme oxygenase 2 (pbsA2).